The primary structure comprises 277 residues: ATP-dependent Clp protease proteolytic subunit, mitochondrial (277 aa).

Residues 1–56 (MWPGILVGGARVASCRYPALGPRLAAHFPAQRPPQRTLQNGLALQRCLHATATRAL) constitute a mitochondrion transit peptide. Ser-153 acts as the Nucleophile in catalysis. Residue His-178 is part of the active site. Lys-200 is modified (N6-succinyllysine). N6-acetyllysine is present on Lys-211. The interval 246–277 (VHPPQDGEDEPTLVQKEPVEAAPAAEPVPAST) is disordered. Positions 265-277 (EAAPAAEPVPAST) are enriched in low complexity.

It belongs to the peptidase S14 family. As to quaternary structure, fourteen CLPP subunits assemble into 2 heptameric rings which stack back to back to give a disk-like structure with a central cavity. Component of the ClpXP complex formed by the assembly of two CLPP heptameric rings with two CLPX hexameric rings, giving rise to a symmetrical structure with two central CLPP rings flanked by a CLPX ring at either end of the complex. Detected in liver (at protein level). Predominantly expressed in skeletal muscle. Intermediate levels in heart, liver and pancreas. Low in brain, placenta, lung and kidney.

Its subcellular location is the mitochondrion matrix. The enzyme catalyses Hydrolysis of proteins to small peptides in the presence of ATP and magnesium. alpha-casein is the usual test substrate. In the absence of ATP, only oligopeptides shorter than five residues are hydrolyzed (such as succinyl-Leu-Tyr-|-NHMec, and Leu-Tyr-Leu-|-Tyr-Trp, in which cleavage of the -Tyr-|-Leu- and -Tyr-|-Trp bonds also occurs).. Its function is as follows. Protease component of the ClpXP complex that cleaves peptides and various proteins in an ATP-dependent process. Has low peptidase activity in the absence of CLPX. The ClpXP complex can degrade CSN1S1, CSN2 and CSN3, as well as synthetic peptides (in vitro) and may be responsible for a fairly general and central housekeeping function rather than for the degradation of specific substrates. Cleaves PINK1 in the mitochondrion. The protein is ATP-dependent Clp protease proteolytic subunit, mitochondrial of Homo sapiens (Human).